The chain runs to 448 residues: Asparagine--tRNA ligase (448 aa).

The protein belongs to the class-II aminoacyl-tRNA synthetase family. Homodimer.

It localises to the cytoplasm. The catalysed reaction is tRNA(Asn) + L-asparagine + ATP = L-asparaginyl-tRNA(Asn) + AMP + diphosphate + H(+). The protein is Asparagine--tRNA ligase of Streptococcus pyogenes serotype M2 (strain MGAS10270).